Here is a 142-residue protein sequence, read N- to C-terminus: Hemoglobin subunit alpha-B (142 aa).

Positions 2-142 (PFSASDRHDI…VSETLYSKYR (141 aa)) constitute a Globin domain. Residue Gln59 participates in O2 binding. His88 is a binding site for heme b.

Belongs to the globin family. In terms of assembly, heterotetramer of either two alpha-B chains or two alpha-C chains and two beta chains. The two major hemoglobins, B and C, associate upon deoxygenation to form a trimer of tetramers, BC2, that has a much lower affinity for oxygen than either component alone. In terms of tissue distribution, red blood cells.

Its function is as follows. The alpha-B chain is a component of adult hemoglobin B. This is Hemoglobin subunit alpha-B from Aquarana catesbeiana (American bullfrog).